The chain runs to 330 residues: uncharacterized protein (330 aa).

An ATP-binding site is contributed by 125 to 132 (GPPGCGKT).

Belongs to the AAA ATPase family.

This is an uncharacterized protein from Sinorhizobium fredii (strain NBRC 101917 / NGR234).